A 387-amino-acid chain; its full sequence is 4-hydroxy-3-methylbut-2-en-1-yl diphosphate synthase (flavodoxin) (387 aa).

The [4Fe-4S] cluster site is built by C272, C275, C307, and E314.

The protein belongs to the IspG family. Requires [4Fe-4S] cluster as cofactor.

The catalysed reaction is (2E)-4-hydroxy-3-methylbut-2-enyl diphosphate + oxidized [flavodoxin] + H2O + 2 H(+) = 2-C-methyl-D-erythritol 2,4-cyclic diphosphate + reduced [flavodoxin]. It functions in the pathway isoprenoid biosynthesis; isopentenyl diphosphate biosynthesis via DXP pathway; isopentenyl diphosphate from 1-deoxy-D-xylulose 5-phosphate: step 5/6. Converts 2C-methyl-D-erythritol 2,4-cyclodiphosphate (ME-2,4cPP) into 1-hydroxy-2-methyl-2-(E)-butenyl 4-diphosphate. This is 4-hydroxy-3-methylbut-2-en-1-yl diphosphate synthase (flavodoxin) from Granulibacter bethesdensis (strain ATCC BAA-1260 / CGDNIH1).